The following is a 692-amino-acid chain: Threonine--tRNA ligase (692 aa).

A disordered region spans residues 1-20 (MSAPAQPAPGVDGGDPSQAR). The TGS domain occupies 1-74 (MSAPAQPAPG…DVDTDITPVA (74 aa)). Positions 269 to 575 (DHRKLGVELD…LTEHYAGAFP (307 aa)) are catalytic. C374, H425, and H552 together coordinate Zn(2+).

This sequence belongs to the class-II aminoacyl-tRNA synthetase family. Homodimer. Requires Zn(2+) as cofactor.

Its subcellular location is the cytoplasm. The enzyme catalyses tRNA(Thr) + L-threonine + ATP = L-threonyl-tRNA(Thr) + AMP + diphosphate + H(+). Functionally, catalyzes the attachment of threonine to tRNA(Thr) in a two-step reaction: L-threonine is first activated by ATP to form Thr-AMP and then transferred to the acceptor end of tRNA(Thr). Also edits incorrectly charged L-seryl-tRNA(Thr). The chain is Threonine--tRNA ligase from Mycobacterium tuberculosis (strain CDC 1551 / Oshkosh).